The primary structure comprises 487 residues: Glycogen synthase (487 aa).

K23 contacts ADP-alpha-D-glucose.

This sequence belongs to the glycosyltransferase 1 family. Bacterial/plant glycogen synthase subfamily.

The enzyme catalyses [(1-&gt;4)-alpha-D-glucosyl](n) + ADP-alpha-D-glucose = [(1-&gt;4)-alpha-D-glucosyl](n+1) + ADP + H(+). Its pathway is glycan biosynthesis; glycogen biosynthesis. Its function is as follows. Synthesizes alpha-1,4-glucan chains using ADP-glucose. The polypeptide is Glycogen synthase (Pseudomonas fluorescens (strain Pf0-1)).